The chain runs to 61 residues: Phosphoenolpyruvate synthase (61 aa).

It belongs to the PEP-utilizing enzyme family. Requires Mg(2+) as cofactor.

It catalyses the reaction pyruvate + ATP + H2O = phosphoenolpyruvate + AMP + phosphate + 2 H(+). Its pathway is carbohydrate biosynthesis; gluconeogenesis. Its function is as follows. Catalyzes the phosphorylation of pyruvate to phosphoenolpyruvate. This Enterobacter agglomerans (Erwinia herbicola) protein is Phosphoenolpyruvate synthase (ppsA).